We begin with the raw amino-acid sequence, 262 residues long: Aminoglycoside (3'') (9) adenylyltransferase (262 aa).

It catalyses the reaction streptomycin + ATP = 3''-O-adenylylstreptomycin + diphosphate. The enzyme catalyses spectinomycin + ATP = 9-O-adenylylspectinomycin + diphosphate. Mediates bacterial resistance to the antibiotics streptomycin and spectinomycin. In Klebsiella pneumoniae, this protein is Aminoglycoside (3'') (9) adenylyltransferase.